The primary structure comprises 355 residues: UDP-N-acetylglucosamine--N-acetylmuramyl-(pentapeptide) pyrophosphoryl-undecaprenol N-acetylglucosamine transferase (355 aa).

UDP-N-acetyl-alpha-D-glucosamine is bound by residues 15-17, asparagine 127, arginine 163, serine 191, isoleucine 244, 263-268, and glutamine 288; these read TGG and ALTVSE.

This sequence belongs to the glycosyltransferase 28 family. MurG subfamily.

Its subcellular location is the cell inner membrane. It carries out the reaction di-trans,octa-cis-undecaprenyl diphospho-N-acetyl-alpha-D-muramoyl-L-alanyl-D-glutamyl-meso-2,6-diaminopimeloyl-D-alanyl-D-alanine + UDP-N-acetyl-alpha-D-glucosamine = di-trans,octa-cis-undecaprenyl diphospho-[N-acetyl-alpha-D-glucosaminyl-(1-&gt;4)]-N-acetyl-alpha-D-muramoyl-L-alanyl-D-glutamyl-meso-2,6-diaminopimeloyl-D-alanyl-D-alanine + UDP + H(+). The protein operates within cell wall biogenesis; peptidoglycan biosynthesis. In terms of biological role, cell wall formation. Catalyzes the transfer of a GlcNAc subunit on undecaprenyl-pyrophosphoryl-MurNAc-pentapeptide (lipid intermediate I) to form undecaprenyl-pyrophosphoryl-MurNAc-(pentapeptide)GlcNAc (lipid intermediate II). This chain is UDP-N-acetylglucosamine--N-acetylmuramyl-(pentapeptide) pyrophosphoryl-undecaprenol N-acetylglucosamine transferase, found in Citrobacter koseri (strain ATCC BAA-895 / CDC 4225-83 / SGSC4696).